Consider the following 501-residue polypeptide: Cytochrome P450 6j1 (501 aa).

Heme is bound at residue Cys444.

The protein belongs to the cytochrome P450 family. Requires heme as cofactor.

It localises to the endoplasmic reticulum membrane. Its subcellular location is the microsome membrane. The chain is Cytochrome P450 6j1 (CYP6J1) from Blattella germanica (German cockroach).